The chain runs to 32 residues: Allergen Asp fl 1 (32 aa).

The sequence is that of Allergen Asp fl 1 from Aspergillus flavus.